Here is a 469-residue protein sequence, read N- to C-terminus: 3-isopropylmalate dehydratase large subunit (469 aa).

C350, C410, and C413 together coordinate [4Fe-4S] cluster.

Belongs to the aconitase/IPM isomerase family. LeuC type 1 subfamily. As to quaternary structure, heterodimer of LeuC and LeuD. [4Fe-4S] cluster is required as a cofactor.

The enzyme catalyses (2R,3S)-3-isopropylmalate = (2S)-2-isopropylmalate. Its pathway is amino-acid biosynthesis; L-leucine biosynthesis; L-leucine from 3-methyl-2-oxobutanoate: step 2/4. Functionally, catalyzes the isomerization between 2-isopropylmalate and 3-isopropylmalate, via the formation of 2-isopropylmaleate. In Agrobacterium fabrum (strain C58 / ATCC 33970) (Agrobacterium tumefaciens (strain C58)), this protein is 3-isopropylmalate dehydratase large subunit.